The primary structure comprises 65 residues: MSKLKTRKSAAKRFKATATGKFMRRRAFHNHLLDHKSSKLKRHLSTKAVVDERDADNVKLMIPYA.

It belongs to the bacterial ribosomal protein bL35 family.

The chain is Large ribosomal subunit protein bL35 from Prochlorococcus marinus (strain MIT 9301).